We begin with the raw amino-acid sequence, 496 residues long: Glutamyl-tRNA(Gln) amidotransferase subunit B, organellar chromatophore (496 aa).

The protein belongs to the GatB/GatE family. GatB subfamily. In terms of assembly, subunit of the heterotrimeric GatCAB amidotransferase (AdT) complex, composed of A, B and C subunits.

It is found in the plastid. The protein localises to the organellar chromatophore. The catalysed reaction is L-glutamyl-tRNA(Gln) + L-glutamine + ATP + H2O = L-glutaminyl-tRNA(Gln) + L-glutamate + ADP + phosphate + H(+). Its function is as follows. Allows the formation of correctly charged Gln-tRNA(Gln) through the transamidation of misacylated Glu-tRNA(Gln). The reaction takes place in the presence of glutamine and ATP through an activated gamma-phospho-Glu-tRNA(Gln). The protein is Glutamyl-tRNA(Gln) amidotransferase subunit B, organellar chromatophore of Paulinella chromatophora.